A 553-amino-acid chain; its full sequence is Formate--tetrahydrofolate ligase (553 aa).

ATP is bound at residue threonine 65–serine 72.

It belongs to the formate--tetrahydrofolate ligase family.

It catalyses the reaction (6S)-5,6,7,8-tetrahydrofolate + formate + ATP = (6R)-10-formyltetrahydrofolate + ADP + phosphate. It participates in one-carbon metabolism; tetrahydrofolate interconversion. In Brachyspira hyodysenteriae (strain ATCC 49526 / WA1), this protein is Formate--tetrahydrofolate ligase.